The sequence spans 363 residues: Ferrochelatase (363 aa).

Residues histidine 209 and glutamate 290 each contribute to the Fe cation site.

Belongs to the ferrochelatase family.

Its subcellular location is the cytoplasm. The enzyme catalyses heme b + 2 H(+) = protoporphyrin IX + Fe(2+). Its pathway is porphyrin-containing compound metabolism; protoheme biosynthesis; protoheme from protoporphyrin-IX: step 1/1. In terms of biological role, catalyzes the ferrous insertion into protoporphyrin IX. In Methylibium petroleiphilum (strain ATCC BAA-1232 / LMG 22953 / PM1), this protein is Ferrochelatase.